A 145-amino-acid chain; its full sequence is MRTTPMANASTIERKWLVVDAAGKTLGRLSSEVAAILRGKHKPTYTPHVDTGDHVIIINAEKIELTGKKLTDKIYYRHTQHPGGLKSRTALEMRTNYPEKMLELAIKGMLPKGSLGRQMFKKLNVYRGSEHPHEAQKPEVYELRG.

Belongs to the universal ribosomal protein uL13 family. In terms of assembly, part of the 50S ribosomal subunit. Binds to Obg (AC P20964).

Its function is as follows. This protein is one of the early assembly proteins of the 50S ribosomal subunit, although it is not seen to bind rRNA by itself. It is important during the early stages of 50S assembly. This is Large ribosomal subunit protein uL13 from Bacillus subtilis (strain 168).